A 247-amino-acid chain; its full sequence is Suppressor of silencing P0 (247 aa).

The F-box-like domain maps to 76 to 95 (LPRHLHYECLEWGLLCGTHP).

Belongs to the polerovirus P0 protein family.

Its function is as follows. Suppressor of RNA-mediated gene silencing, also known as post-transcriptional gene silencing (PTGS), a mechanism of plant viral defense that limits the accumulation of viral RNAs. The P0 protein suppresses local PTGS using its F-box-like domain to mediate destabilization and degradation of the AGO1 protein, although not via an interaction with host SKP1A. Participates, together with the proteins P1 and P7, in the inhibition of the induction of aphid-induced host phytohormones. This could play a role in the attraction to the infected plants by aphids. The sequence is that of Suppressor of silencing P0 from Potato leafroll virus (strain Potato/Scotland/strain 1/1984) (PLrV).